A 274-amino-acid chain; its full sequence is Diaminopimelate epimerase (274 aa).

N11, Q44, and N64 together coordinate substrate. The active-site Proton donor is the C73. Substrate-binding positions include 74–75 (GN), N157, N190, and 208–209 (ER). The active-site Proton acceptor is C217. 218 to 219 (GS) serves as a coordination point for substrate.

The protein belongs to the diaminopimelate epimerase family. Homodimer (Potential). Previously DapF has been proposed to be a monomer, however it seems that it adopts a dimeric structure.

It is found in the cytoplasm. The catalysed reaction is (2S,6S)-2,6-diaminopimelate = meso-2,6-diaminopimelate. It functions in the pathway amino-acid biosynthesis; L-lysine biosynthesis via DAP pathway; DL-2,6-diaminopimelate from LL-2,6-diaminopimelate: step 1/1. With respect to regulation, inhibited by LL-aziridino (LL-AziDAP), DL-aziridino (DL-AziDAP). Also inhibited by (2S,3R,6S)-2,6-diamino-3-fluoropimelate (L,L-3-fluoro-DAP) and (2R,3S,6S)-2,6-diamino-3-fluoropimelate (D,L-3-fluoro-DAP). Its function is as follows. Catalyzes the stereoinversion of LL-2,6-diaminopimelate (L,L-DAP) to meso-diaminopimelate (meso-DAP), a precursor of L-lysine and an essential component of the bacterial peptidoglycan. Only accepts DAP isomers with the L configuration. In Haemophilus influenzae (strain ATCC 51907 / DSM 11121 / KW20 / Rd), this protein is Diaminopimelate epimerase.